The chain runs to 287 residues: Alpha-tubulin N-acetyltransferase 2 (287 aa).

The N-acetyltransferase domain occupies 2–193; the sequence is VEFAFDIKHL…NNFVLYEGFF (192 aa). Residues 127-140 and 163-172 contribute to the acetyl-CoA site; these read FYVHESRQRCGQGK and SNKMLAFMAK.

This sequence belongs to the acetyltransferase ATAT1 family.

The protein resides in the midbody. It is found in the midbody ring. It catalyses the reaction L-lysyl-[alpha-tubulin] + acetyl-CoA = N(6)-acetyl-L-lysyl-[alpha-tubulin] + CoA + H(+). Functionally, specifically acetylates 'Lys-40' in alpha-tubulin on the lumenal side of microtubules. Promotes microtubule destabilization and accelerates microtubule dynamics; this activity may be independent of acetylation activity. Acetylates alpha-tubulin with a slow enzymatic rate, due to a catalytic site that is not optimized for acetyl transfer. Enters the microtubule through each end and diffuses quickly throughout the lumen of microtubules. Acetylates only long/old microtubules because of its slow acetylation rate since it does not have time to act on dynamically unstable microtubules before the enzyme is released. Main acetyltransferase responsible for alpha-tubulin 'Lys-40' acetylation in germline cells during the early stages of oogenesis. Required for normal egg chamber separation. This is Alpha-tubulin N-acetyltransferase 2 from Drosophila melanogaster (Fruit fly).